Here is a 311-residue protein sequence, read N- to C-terminus: MSSLPSSRRTAGDTWAITESVGATALGVAAARAVETAATNPLIRDEFAKVLVSSAGTAWARLADADLAWLDGDQLGRRVHRVACDYQAVRTHFFDEYFGAAVDAGVRQVVILAAGLDARAYRLNWPAGTVVYEIDQPSVLEYKAGILQSHGAVPTARRHAVAVDLRDDWPAALIAAGFDGTQPTAWLAEGLLPYLPGDAADRLFDMVTALSAPGSQVAVEAFTMNTKGNTQRWNRMRERLGLDIDVQALTYHEPDRSDAAQWLATHGWQVHSVSNREEMARLGRAIPQDLVDETVRTTLLRGRLVTPAQPA.

S-adenosyl-L-methionine-binding positions include D135 and 164 to 165 (DL).

The protein belongs to the UPF0677 family.

In terms of biological role, exhibits S-adenosyl-L-methionine-dependent methyltransferase activity. The polypeptide is Putative S-adenosyl-L-methionine-dependent methyltransferase MRA_0152 (Mycobacterium tuberculosis (strain ATCC 25177 / H37Ra)).